The chain runs to 324 residues: Glyceraldehyde-3-phosphate dehydrogenase 1 (324 aa).

NAD(+)-binding positions include 13–14 (RI), aspartate 35, and lysine 85. D-glyceraldehyde 3-phosphate-binding positions include 157–159 (SCT), threonine 188, 217–218 (TG), and arginine 240. Cysteine 158 (nucleophile) is an active-site residue. An NAD(+)-binding site is contributed by asparagine 322.

This sequence belongs to the glyceraldehyde-3-phosphate dehydrogenase family. Homotetramer.

The protein localises to the cytoplasm. The catalysed reaction is D-glyceraldehyde 3-phosphate + phosphate + NAD(+) = (2R)-3-phospho-glyceroyl phosphate + NADH + H(+). It participates in carbohydrate degradation; glycolysis; pyruvate from D-glyceraldehyde 3-phosphate: step 1/5. The sequence is that of Glyceraldehyde-3-phosphate dehydrogenase 1 (GPD-1) from Globodera rostochiensis (Golden nematode worm).